We begin with the raw amino-acid sequence, 138 residues long: Nucleoside diphosphate kinase (138 aa).

6 residues coordinate ATP: Lys-9, Phe-57, Arg-85, Thr-91, Arg-102, and Asn-112. His-115 functions as the Pros-phosphohistidine intermediate in the catalytic mechanism.

Belongs to the NDK family. Homotetramer. Mg(2+) is required as a cofactor.

The protein resides in the cytoplasm. The enzyme catalyses a 2'-deoxyribonucleoside 5'-diphosphate + ATP = a 2'-deoxyribonucleoside 5'-triphosphate + ADP. The catalysed reaction is a ribonucleoside 5'-diphosphate + ATP = a ribonucleoside 5'-triphosphate + ADP. Major role in the synthesis of nucleoside triphosphates other than ATP. The ATP gamma phosphate is transferred to the NDP beta phosphate via a ping-pong mechanism, using a phosphorylated active-site intermediate. This is Nucleoside diphosphate kinase from Deinococcus geothermalis (strain DSM 11300 / CIP 105573 / AG-3a).